Here is a 347-residue protein sequence, read N- to C-terminus: 4-hydroxy-2-oxovalerate aldolase (347 aa).

The Pyruvate carboxyltransferase domain maps to 2–252; sequence ILISDATLRD…DTRTTFERVM (251 aa). 10-11 contributes to the substrate binding site; sequence RD. Aspartate 11 contributes to the Mn(2+) binding site. The Proton acceptor role is filled by histidine 14. Residues serine 164 and histidine 191 each coordinate substrate. Mn(2+)-binding residues include histidine 191 and histidine 193.

It belongs to the 4-hydroxy-2-oxovalerate aldolase family.

The catalysed reaction is (S)-4-hydroxy-2-oxopentanoate = acetaldehyde + pyruvate. In Burkholderia pseudomallei (strain 1710b), this protein is 4-hydroxy-2-oxovalerate aldolase (mhpE).